Reading from the N-terminus, the 399-residue chain is Dihydrolipoyllysine-residue succinyltransferase component of 2-oxoglutarate dehydrogenase complex (399 aa).

The region spanning 2 to 77 (AIDIKAPTFP…LSGELLGKLT (76 aa)) is the Lipoyl-binding domain. N6-lipoyllysine is present on Lys43. Residues 104-141 (ILSPAARKIAEENAIAADSITGTGKGGRVTKEDAVAAA) enclose the Peripheral subunit-binding (PSBD) domain. Active-site residues include His370 and Asp374.

This sequence belongs to the 2-oxoacid dehydrogenase family. As to quaternary structure, forms a 24-polypeptide structural core with octahedral symmetry. Part of the 2-oxoglutarate dehydrogenase (OGDH) complex composed of E1 (2-oxoglutarate dehydrogenase), E2 (dihydrolipoamide succinyltransferase) and E3 (dihydrolipoamide dehydrogenase); the complex contains multiple copies of the three enzymatic components (E1, E2 and E3). (R)-lipoate is required as a cofactor.

The catalysed reaction is N(6)-[(R)-dihydrolipoyl]-L-lysyl-[protein] + succinyl-CoA = N(6)-[(R)-S(8)-succinyldihydrolipoyl]-L-lysyl-[protein] + CoA. It functions in the pathway amino-acid degradation; L-lysine degradation via saccharopine pathway; glutaryl-CoA from L-lysine: step 6/6. Its function is as follows. E2 component of the 2-oxoglutarate dehydrogenase (OGDH) complex which catalyzes the second step in the conversion of 2-oxoglutarate to succinyl-CoA and CO(2). In Azotobacter vinelandii, this protein is Dihydrolipoyllysine-residue succinyltransferase component of 2-oxoglutarate dehydrogenase complex (sucB).